Here is a 342-residue protein sequence, read N- to C-terminus: Tetraacyldisaccharide 4'-kinase (342 aa).

56-63 is a binding site for ATP; it reads TAGGAGKT.

It belongs to the LpxK family.

The enzyme catalyses a lipid A disaccharide + ATP = a lipid IVA + ADP + H(+). Its pathway is glycolipid biosynthesis; lipid IV(A) biosynthesis; lipid IV(A) from (3R)-3-hydroxytetradecanoyl-[acyl-carrier-protein] and UDP-N-acetyl-alpha-D-glucosamine: step 6/6. Transfers the gamma-phosphate of ATP to the 4'-position of a tetraacyldisaccharide 1-phosphate intermediate (termed DS-1-P) to form tetraacyldisaccharide 1,4'-bis-phosphate (lipid IVA). The protein is Tetraacyldisaccharide 4'-kinase of Parvibaculum lavamentivorans (strain DS-1 / DSM 13023 / NCIMB 13966).